The primary structure comprises 565 residues: uncharacterized protein (565 aa).

This is an uncharacterized protein from Acanthamoeba polyphaga mimivirus (APMV).